A 210-amino-acid polypeptide reads, in one-letter code: Ribosomal RNA large subunit methyltransferase E (210 aa).

Glycine 61, tryptophan 63, aspartate 81, aspartate 97, and aspartate 122 together coordinate S-adenosyl-L-methionine. Lysine 162 (proton acceptor) is an active-site residue. The span at 187 to 196 (KPEASRKRSP) shows a compositional bias: basic and acidic residues. Residues 187–210 (KPEASRKRSPEVYALGQGKRAHMK) are disordered.

It belongs to the class I-like SAM-binding methyltransferase superfamily. RNA methyltransferase RlmE family.

The protein localises to the cytoplasm. It catalyses the reaction uridine(2552) in 23S rRNA + S-adenosyl-L-methionine = 2'-O-methyluridine(2552) in 23S rRNA + S-adenosyl-L-homocysteine + H(+). Specifically methylates the uridine in position 2552 of 23S rRNA at the 2'-O position of the ribose in the fully assembled 50S ribosomal subunit. This Stenotrophomonas maltophilia (strain K279a) protein is Ribosomal RNA large subunit methyltransferase E.